The primary structure comprises 163 residues: Acetolactate synthase small subunit (163 aa).

The ACT domain occupies 4 to 79 (ILSVLLENES…VFKVVNLSEQ (76 aa)).

The protein belongs to the acetolactate synthase small subunit family. In terms of assembly, dimer of large and small chains.

The catalysed reaction is 2 pyruvate + H(+) = (2S)-2-acetolactate + CO2. The protein operates within amino-acid biosynthesis; L-isoleucine biosynthesis; L-isoleucine from 2-oxobutanoate: step 1/4. It functions in the pathway amino-acid biosynthesis; L-valine biosynthesis; L-valine from pyruvate: step 1/4. This chain is Acetolactate synthase small subunit (ilvH), found in Haemophilus influenzae (strain ATCC 51907 / DSM 11121 / KW20 / Rd).